We begin with the raw amino-acid sequence, 297 residues long: Mycothiol acetyltransferase (297 aa).

2 consecutive N-acetyltransferase domains span residues aspartate 8–proline 153 and valine 156–leucine 297. Glutamate 36 contributes to the 1D-myo-inositol 2-(L-cysteinylamino)-2-deoxy-alpha-D-glucopyranoside binding site. Leucine 80 to valine 82 contributes to the acetyl-CoA binding site. 1D-myo-inositol 2-(L-cysteinylamino)-2-deoxy-alpha-D-glucopyranoside-binding residues include glutamate 183, lysine 223, and glutamate 231. Residues valine 235–valine 237 and glutamine 242–lysine 248 contribute to the acetyl-CoA site. 1D-myo-inositol 2-(L-cysteinylamino)-2-deoxy-alpha-D-glucopyranoside is bound at residue tyrosine 269. Asparagine 274–arginine 279 is an acetyl-CoA binding site.

The protein belongs to the acetyltransferase family. MshD subfamily. Monomer.

The catalysed reaction is 1D-myo-inositol 2-(L-cysteinylamino)-2-deoxy-alpha-D-glucopyranoside + acetyl-CoA = mycothiol + CoA + H(+). Catalyzes the transfer of acetyl from acetyl-CoA to desacetylmycothiol (Cys-GlcN-Ins) to form mycothiol. The sequence is that of Mycothiol acetyltransferase from Actinosynnema mirum (strain ATCC 29888 / DSM 43827 / JCM 3225 / NBRC 14064 / NCIMB 13271 / NRRL B-12336 / IMRU 3971 / 101).